Reading from the N-terminus, the 310-residue chain is Protoheme IX farnesyltransferase (310 aa).

Helical transmembrane passes span 37-57 (LITV…DVLL), 64-84 (LTLL…CYLN), 113-133 (ILAL…IVNH), 134-154 (VAAV…TMWL), 159-181 (TINT…AAVT), 186-208 (IDAW…ALAM), 215-237 (RAAG…QIVW), 257-277 (MLVM…GLKI), and 290-310 (MFFF…LVSL).

The protein belongs to the UbiA prenyltransferase family. Protoheme IX farnesyltransferase subfamily. As to quaternary structure, interacts with CtaA.

It localises to the cell membrane. It carries out the reaction heme b + (2E,6E)-farnesyl diphosphate + H2O = Fe(II)-heme o + diphosphate. The protein operates within porphyrin-containing compound metabolism; heme O biosynthesis; heme O from protoheme: step 1/1. Functionally, converts heme B (protoheme IX) to heme O by substitution of the vinyl group on carbon 2 of heme B porphyrin ring with a hydroxyethyl farnesyl side group. The polypeptide is Protoheme IX farnesyltransferase (Exiguobacterium sibiricum (strain DSM 17290 / CCUG 55495 / CIP 109462 / JCM 13490 / 255-15)).